The chain runs to 621 residues: uncharacterized protein (621 aa).

Low complexity-rich tracts occupy residues 1–10, 63–79, 137–182, and 309–347; these read MIEDNINNNE, TEPLTTQLSSSPTTTPS, NNNN…NNFN, and NQSIQQLQQQQQQQQQQQQQQNNNDNNNNNNNNNNNNNN. Disordered stretches follow at residues 1-29, 63-100, 135-194, 307-374, 430-471, 492-539, and 594-614; these read MIEDNINNNENENEDKNGNGNENENDKNN, TEPLTTQLSSSPTTTPSLKKRKPKTVRNPFIGPSSNKT, DDNN…KDND, KTNQ…EDDT, YNNN…IAKR, KQSQ…IKII, and PTQINSNSSNNIVSPSSSPSK. A compositionally biased stretch (polar residues) spans 348–357; the sequence is STLTSSNSLS. Low complexity-rich tracts occupy residues 431–459, 496–539, and 597–613; these read NNNNNNNNNNNNNNNNNNNNNNNNNNNNN, NNNN…IKII, and INSNSSNNIVSPSSSPS.

This is an uncharacterized protein from Dictyostelium discoideum (Social amoeba).